The sequence spans 917 residues: Translation initiation factor IF-2 (917 aa).

The interval 1-312 (MEEQKSIKET…KGGREENENT (312 aa)) is disordered. A compositionally biased stretch (basic residues) spans 20 to 30 (TKKKLVIKKKA). Positions 41–59 (PGAQGQTTATEAKQSSPAS) are enriched in polar residues. 2 stretches are compositionally biased toward basic and acidic residues: residues 60 to 76 (SDKKKDLNELIREEAKR) and 95 to 118 (RPDRKPEPLPQPDREKAPMDRKPE). 3 stretches are compositionally biased toward gly residues: residues 132 to 141 (SGGGQGGGNQ), 167 to 256 (QTGG…GYQG), and 281 to 293 (APGGLPGAGGPGG). The segment covering 297–312 (RVFDKEKGGREENENT) has biased composition (basic and acidic residues). The tr-type G domain maps to 414 to 587 (TRPPVVTIMG…ELLDHKANPK (174 aa)). The G1 stretch occupies residues 423–430 (GHVDHGKT). 423-430 (GHVDHGKT) provides a ligand contact to GTP. Positions 448 to 452 (GITQH) are G2. The G3 stretch occupies residues 469–472 (DTPG). Residues 469 to 473 (DTPGH) and 523 to 526 (NKID) contribute to the GTP site. Residues 523–526 (NKID) form a G4 region. The segment at 559 to 561 (SAK) is G5.

The protein belongs to the TRAFAC class translation factor GTPase superfamily. Classic translation factor GTPase family. IF-2 subfamily.

It is found in the cytoplasm. Functionally, one of the essential components for the initiation of protein synthesis. Protects formylmethionyl-tRNA from spontaneous hydrolysis and promotes its binding to the 30S ribosomal subunits. Also involved in the hydrolysis of GTP during the formation of the 70S ribosomal complex. The chain is Translation initiation factor IF-2 from Leptospira biflexa serovar Patoc (strain Patoc 1 / ATCC 23582 / Paris).